The chain runs to 165 residues: UPF0303 protein Bcenmc03_1534 (165 aa).

Belongs to the UPF0303 family.

This is UPF0303 protein Bcenmc03_1534 from Burkholderia orbicola (strain MC0-3).